Here is a 1151-residue protein sequence, read N- to C-terminus: uncharacterized protein (1151 aa).

5 disordered regions span residues 611–633 (FVKG…DEEE), 709–740 (NLVP…IMEV), 753–778 (PPIL…KSIL), 795–880 (PPVI…PPKL), and 1060–1151 (LKEP…TQQE). Composition is skewed to pro residues over residues 754–773 (PILP…PQEP) and 811–842 (IVPP…PSQP). Residues 867 to 878 (PITPDTPAITPP) are compositionally biased toward low complexity. A compositionally biased stretch (acidic residues) spans 1082-1091 (ESDNEDDELD). The segment covering 1131–1142 (PVDTSDATKIST) has biased composition (polar residues).

This is an uncharacterized protein from Ostreid herpesvirus 1 (isolate France) (OsHV-1).